Here is a 409-residue protein sequence, read N- to C-terminus: Nucleoprotein (409 aa).

Disordered stretches follow at residues 1-84 (MASG…KGGR) and 121-194 (ADTK…DSGD). Over residues 15–31 (PVIKLGGPKPPKVGSSG) the composition is skewed to low complexity. The tract at residues 29–160 (SSGNASWFQA…GNFRWDFIPL (132 aa)) is RNA-binding. One can recognise a CoV N NTD domain in the interval 31–156 (GNASWFQAIK…GGPDGNFRWD (126 aa)). Residues 70-84 (YWRRQARFKPGKGGR) show a composition bias toward basic residues. The segment covering 162 to 179 (RGRSGRSTAASSAAASRA) has biased composition (low complexity). Residues 180-192 (PSREGSRGRRSDS) are compositionally biased toward basic and acidic residues. Phosphoserine; by host occurs at positions 190 and 192. The CoV N CTD domain occupies 215 to 331 (TKAKADEMAH…QCVDGVGTRP (117 aa)). Residues 226 to 333 (RYCKRTIPPN…VDGVGTRPKD (108 aa)) form a dimerization region. Cystine bridges form between Cys-281–Cys-308 and Cys-320–Cys-323. Residues 327–396 (VGTRPKDDEP…QLEFYDEPKV (70 aa)) form a disordered region. Positions 358-367 (QRPKKEKKLK) are enriched in basic residues. The segment covering 368 to 384 (KQDDEADKALTSDEERN) has biased composition (basic and acidic residues). Residue Thr-378 is modified to Phosphothreonine; by host. Position 379 is a phosphoserine; by host (Ser-379).

This sequence belongs to the gammacoronavirus nucleocapsid protein family. As to quaternary structure, homooligomer. Both monomeric and oligomeric forms interact with RNA. Interacts with protein M. Interacts with NSP3; this interaction serves to tether the genome to the newly translated replicase-transcriptase complex at a very early stage of infection. In terms of processing, ADP-ribosylated. The ADP-ribosylation is retained in the virion during infection. Post-translationally, phosphorylated on serine and threonine residues.

It localises to the virion. It is found in the host endoplasmic reticulum-Golgi intermediate compartment. The protein resides in the host Golgi apparatus. Functionally, packages the positive strand viral genome RNA into a helical ribonucleocapsid (RNP) and plays a fundamental role during virion assembly through its interactions with the viral genome and membrane protein M. Plays an important role in enhancing the efficiency of subgenomic viral RNA transcription as well as viral replication. In Gallus gallus (Chicken), this protein is Nucleoprotein.